The primary structure comprises 236 residues: Lipoprotein signal peptidase (236 aa).

The next 4 helical transmembrane spans lie at phenylalanine 8–phenylalanine 28, tryptophan 44–threonine 64, valine 68–leucine 88, and leucine 98–phenylalanine 118. Catalysis depends on residues aspartate 141 and aspartate 174. Residues cysteine 166–leucine 186 form a helical membrane-spanning segment.

It belongs to the peptidase A8 family.

Its subcellular location is the cell inner membrane. The catalysed reaction is Release of signal peptides from bacterial membrane prolipoproteins. Hydrolyzes -Xaa-Yaa-Zaa-|-(S,diacylglyceryl)Cys-, in which Xaa is hydrophobic (preferably Leu), and Yaa (Ala or Ser) and Zaa (Gly or Ala) have small, neutral side chains.. The protein operates within protein modification; lipoprotein biosynthesis (signal peptide cleavage). Functionally, this protein specifically catalyzes the removal of signal peptides from prolipoproteins. In Amoebophilus asiaticus (strain 5a2), this protein is Lipoprotein signal peptidase.